The sequence spans 341 residues: Delta(1)-pyrroline-2-carboxylate reductase (341 aa).

The Charge relay system role is filled by S47. Residue H48 is the Proton donor of the active site. Residue R52 participates in substrate binding. Residue 120-124 (HFSAL) participates in NADP(+) binding. T160 serves as a coordination point for substrate. 178-180 (DFA) contacts NADP(+). 186 to 187 (RG) provides a ligand contact to substrate. E188 serves as the catalytic Charge relay system. NADP(+) contacts are provided by residues 229–230 (HK) and 305–311 (RLPSERR).

The protein belongs to the LDH2/MDH2 oxidoreductase family. As to quaternary structure, homodimer.

It carries out the reaction L-proline + NAD(+) = 1-pyrroline-2-carboxylate + NADH + H(+). It catalyses the reaction L-proline + NADP(+) = 1-pyrroline-2-carboxylate + NADPH + H(+). Catalyzes the reduction of Delta(1)-pyrroline-2-carboxylate (Pyr2C) to L-proline, using NADPH as the electron donor. Is likely involved in a degradation pathway that converts cis- and trans-3-hydroxy-L-proline (c3LHyp and t3LHyp) to L-proline, which would allow S.novella to grow on c3LHyp or t3LHyp as a sole carbon source. The sequence is that of Delta(1)-pyrroline-2-carboxylate reductase from Ancylobacter novellus (strain ATCC 8093 / DSM 506 / JCM 20403 / CCM 1077 / IAM 12100 / NBRC 12443 / NCIMB 10456) (Starkeya novella).